The sequence spans 123 residues: Cliotide T12 (123 aa).

Positions 1-28 (MASLRIAPLALFFFLAASVMFTVEKTEA) are cleaved as a signal peptide. Residues 29-58 (GIPCGESCVFIPCITGAIGCSCKSKVCYRD) constitute a cross-link (cyclopeptide (Gly-Asp)). Cystine bridges form between C32–C48, C36–C50, and C41–C55. Positions 59-123 (HVIAAEAKTM…KDHLKMSVPN (65 aa)) are cleaved as a propeptide — removed in mature form.

In terms of processing, contains 3 disulfide bonds. This is a cyclic peptide.

Its function is as follows. Probably participates in a plant defense mechanism. This chain is Cliotide T12, found in Clitoria ternatea (Butterfly pea).